The primary structure comprises 480 residues: Membrane-bound lytic murein transglycosylase F (480 aa).

An N-terminal signal peptide occupies residues 1–15 (MKKLLFVLLTITLLA). A non-LT domain region spans residues 16–259 (SCQKVSVEQT…HLNEKYFAHV (244 aa)). The LT domain stretch occupies residues 260–480 (KRFDYVDTRA…QENLSGAQPQ (221 aa)). Glu-304 is an active-site residue.

In the N-terminal section; belongs to the bacterial solute-binding protein 3 family. It in the C-terminal section; belongs to the transglycosylase Slt family.

The protein resides in the cell outer membrane. The catalysed reaction is Exolytic cleavage of the (1-&gt;4)-beta-glycosidic linkage between N-acetylmuramic acid (MurNAc) and N-acetylglucosamine (GlcNAc) residues in peptidoglycan, from either the reducing or the non-reducing ends of the peptidoglycan chains, with concomitant formation of a 1,6-anhydrobond in the MurNAc residue.. In terms of biological role, murein-degrading enzyme that degrades murein glycan strands and insoluble, high-molecular weight murein sacculi, with the concomitant formation of a 1,6-anhydromuramoyl product. Lytic transglycosylases (LTs) play an integral role in the metabolism of the peptidoglycan (PG) sacculus. Their lytic action creates space within the PG sacculus to allow for its expansion as well as for the insertion of various structures such as secretion systems and flagella. The sequence is that of Membrane-bound lytic murein transglycosylase F from Shewanella sediminis (strain HAW-EB3).